The sequence spans 569 residues: Rab GTPase-binding effector protein 2 (569 aa).

Disordered regions lie at residues 1-38, 181-267, and 388-414; these read MAAA…AELG, QRRP…ASLV, and RAEQ…PSSV. Ala2 is subject to N-acetylalanine. The segment covering 29–38 has biased composition (low complexity); it reads EGANGEAELG. The stretch at 34 to 184 forms a coiled coil; sequence EAELGELSRL…ELIQEIQRRP (151 aa). Phosphoserine occurs at positions 189, 193, 200, and 204. The span at 245-257 shows a compositional bias: low complexity; it reads SSSSLPRSRQGLS. Residues 292–391 adopt a coiled-coil conformation; that stretch reads WEQLQMEGRQ…EENQGLRAEQ (100 aa). A compositionally biased stretch (low complexity) spans 393–403; it reads PSSAPQGPQQE. Positions 423-523 form a coiled coil; sequence RTRQEARAQL…LQAELETSEQ (101 aa).

The protein belongs to the rabaptin family. As to quaternary structure, heterodimer with RABGEF1. The dimer binds RAB5A that has been activated by GTP-binding. Interacts with SDCCAG8; this interaction is important for ciliogenesis regulation. Interacts with RAB4; this interaction may mediate VEGFR2 cell surface expression.

The protein localises to the cytoplasm. Its subcellular location is the early endosome. It is found in the cytoskeleton. It localises to the microtubule organizing center. The protein resides in the centrosome. The protein localises to the cilium basal body. Its function is as follows. Plays a role in membrane trafficking and in homotypic early endosome fusion. Participates in arteriogenesis by regulating vascular endothelial growth factor receptor 2/VEGFR2 cell surface expression and endosomal trafficking. By interacting with SDCCAG8, localizes to centrosomes and plays a critical role in ciliogenesis. This Pongo abelii (Sumatran orangutan) protein is Rab GTPase-binding effector protein 2 (RABEP2).